Here is a 630-residue protein sequence, read N- to C-terminus: Putative F-box/LRR-repeat protein At3g49150 (630 aa).

Positions 15-63 constitute an F-box domain; sequence KDIISDLPEALICHILSFLPIEDSALTSVLSKKWQHLFAFRPNLEFDDA. 9 LRR repeats span residues 101–129, 152–178, 180–205, 228–253, 300–325, 337–362, 406–436, 437–465, and 567–590; these read CRDFTDPTCVSRWISNVMERGVSDLDLRC, RIETGNGAFIDVEDVFLPNLKTLYLNK, LLRHSDNGFVKLITSCHVLEDLFIMN, CEDVHAVNPESVSFDTPNLVYFVYHD, ISNVQILELFANTIEVLTFCCEQIPV, DQKAGWESLPVLLKNCPDLESLIFDG, CDDYDDMEKQIELVMYFLETMPNLEEMKLFY, DTQIYEDVISKLQMDLRRTLSLRSLFNAR, and DSSIQLDFVQQIVHNVHSLTGLNW.

This chain is Putative F-box/LRR-repeat protein At3g49150, found in Arabidopsis thaliana (Mouse-ear cress).